Consider the following 115-residue polypeptide: MAFPTSSAQQAETNRKILEEIQTKKQLLIGLGSTANQMPAPQLLGQPTVTAEFVQNVSATPNAAGGIAAPRSAFNPTSSTTLGFFIPQDSYFGNSFIPVLPRLEPVPTPPAPNSK.

The protein belongs to the SOSS-C family.

In Drosophila mojavensis (Fruit fly), this protein is SOSS complex subunit C homolog.